The following is a 236-amino-acid chain: HTH-type transcriptional regulator SACE_5812 (236 aa).

The HTH tetR-type domain occupies 30–90; that stretch reads LLTQDKIVSA…LALDAVFGEV (61 aa). Residues 53–72 constitute a DNA-binding region (H-T-H motif); sequence SMRKLADRLQAHATSLYWHV.

In terms of biological role, transcriptional regulator that inhibits erythromycin production. Directly represses the expression of SACE_5813, eryAI (encoding polyketide synthase I) and ermE (encoding rRNA methyltransferase), suggesting its direct regulation of the erythromycin biosynthesis gene cluster. May play an important role in regulating secondary metabolism in actinomycetes. The polypeptide is HTH-type transcriptional regulator SACE_5812 (Saccharopolyspora erythraea (strain ATCC 11635 / DSM 40517 / JCM 4748 / NBRC 13426 / NCIMB 8594 / NRRL 2338)).